Reading from the N-terminus, the 672-residue chain is DNA ligase (672 aa).

NAD(+) is bound by residues 35 to 39 (DAQYD), 84 to 85 (SL), and E115. Catalysis depends on K117, which acts as the N6-AMP-lysine intermediate. Residues R138, E178, K294, and K318 each coordinate NAD(+). 4 residues coordinate Zn(2+): C412, C415, C430, and C435. In terms of domain architecture, BRCT spans 592–672 (ATGGPFVGKS…AFLQMLQTNA (81 aa)).

It belongs to the NAD-dependent DNA ligase family. LigA subfamily. Mg(2+) serves as cofactor. The cofactor is Mn(2+).

The enzyme catalyses NAD(+) + (deoxyribonucleotide)n-3'-hydroxyl + 5'-phospho-(deoxyribonucleotide)m = (deoxyribonucleotide)n+m + AMP + beta-nicotinamide D-nucleotide.. DNA ligase that catalyzes the formation of phosphodiester linkages between 5'-phosphoryl and 3'-hydroxyl groups in double-stranded DNA using NAD as a coenzyme and as the energy source for the reaction. It is essential for DNA replication and repair of damaged DNA. The sequence is that of DNA ligase from Myxococcus xanthus (strain DK1622).